The following is a 377-amino-acid chain: MKRILCITGTRADFGKLKPLLAYIENHPDLELHLIVTGMHMMKTYGRTYKEVTRENYQHTYLFSNQIQGEPMGAVLGNTITFISRLSDEIEPDMVMIHGDRLEALAGAAVGALSSRLVCHIEGGELSGTVDDSIRHSISKLSHIHLVANEQAVTRLVQMGEKRKHIHIIGSPDLDVMASSTLPSLEEVKEYYGLPYENYGISMFHPVTTEAHLMPQYAAQYFKALELSGQNIISIYPNNDTGTESILQELLKYQSDKFIAFPSIRFEYFLVLLKHAKFMVGNSSAGIREAPLYGVPSIDVGTRQSNRHMGKSIIHTDYETKNIFDAIQQACSLGKFEADDTFNGGDTRTSTERFAEVINNPETWNVSAQKRFIDLNL.

His-212 is a catalytic residue.

This sequence belongs to the UDP-N-acetylglucosamine 2-epimerase family. In terms of assembly, homodimer.

It carries out the reaction UDP-N-acetyl-alpha-D-glucosamine + H2O = aldehydo-N-acetyl-D-mannosamine + UDP + H(+). In terms of biological role, catalyzes the conversion of UDP-N-acetylglucosamine (UDP-GlcNAc) to UDP and N-acetyl-D-mannosamine (ManNAc). In Neisseria meningitidis serogroup B (strain ATCC BAA-335 / MC58), this protein is UDP-N-acetylglucosamine 2-epimerase (siaA).